We begin with the raw amino-acid sequence, 243 residues long: NAD-dependent protein deacetylase (243 aa).

Residues 1-243 enclose the Deacetylase sirtuin-type domain; the sequence is MKHDLETLKH…VSVVKSLMTE (243 aa). 7 residues coordinate NAD(+): alanine 24, phenylalanine 35, arginine 36, glutamine 105, isoleucine 107, aspartate 108, and histidine 123. Residue phenylalanine 35 participates in nicotinamide binding. The nicotinamide site is built by isoleucine 107 and aspartate 108. The Proton acceptor role is filled by histidine 123. Cysteine 131, cysteine 134, cysteine 151, and cysteine 154 together coordinate Zn(2+). Serine 192, serine 193, asparagine 215, and aspartate 232 together coordinate NAD(+).

Belongs to the sirtuin family. Class U subfamily. Requires Zn(2+) as cofactor.

Its subcellular location is the cytoplasm. It carries out the reaction N(6)-acetyl-L-lysyl-[protein] + NAD(+) + H2O = 2''-O-acetyl-ADP-D-ribose + nicotinamide + L-lysyl-[protein]. NAD-dependent protein deacetylase which modulates the activities of several enzymes which are inactive in their acetylated form. The chain is NAD-dependent protein deacetylase from Staphylococcus aureus (strain NCTC 8325 / PS 47).